Consider the following 559-residue polypeptide: POU domain protein 1 (559 aa).

Residues 259-333 enclose the POU-specific domain; sequence EDLPSSDDLE…LLQKWLHEAD (75 aa). The homeobox DNA-binding region spans 351–410; sequence KRKKRTSIEANVKSILESSFMKLSKPSAQDISSLAEKLSLEKEVVRVWFCNRRQKEKRIT.

It belongs to the POU transcription factor family.

Its subcellular location is the nucleus. This chain is POU domain protein 1 (POU1), found in Dugesia japonica (Planarian).